The sequence spans 342 residues: Uroporphyrinogen decarboxylase (342 aa).

Residues 24–28, Asp-74, Tyr-149, Ser-204, and His-319 each bind substrate; that span reads RQAGR.

Belongs to the uroporphyrinogen decarboxylase family. As to quaternary structure, homodimer.

The protein localises to the cytoplasm. The enzyme catalyses uroporphyrinogen III + 4 H(+) = coproporphyrinogen III + 4 CO2. It functions in the pathway porphyrin-containing compound metabolism; protoporphyrin-IX biosynthesis; coproporphyrinogen-III from 5-aminolevulinate: step 4/4. In terms of biological role, catalyzes the decarboxylation of four acetate groups of uroporphyrinogen-III to yield coproporphyrinogen-III. The polypeptide is Uroporphyrinogen decarboxylase (Chelativorans sp. (strain BNC1)).